The following is a 278-amino-acid chain: MRTIALLLAYDGTDFAGSQWQTDIRTVQGALESAWEALTQERRRIVLAGRTDAGVHATGQVAHVQTTTRHNLQTIWRGLNAHLPVDLAIQNVGEAVPDFHARFSAIQREYRYLIDCAAAPLPQLRHQVLHYAGTLDVAAMTAALKLLEGTHDFAAFTTATPAQRSTVRTMYWTRVGDYEWFERRLLAIEVAANAFLQHMVRMIVGTLLLVGRGRMTVDQFGEVLASRDRRLAGPTAPAHGLTLTAVRYPPGLIRWVEPSKRQNGTTKVEQPSSYVHEE.

D52 acts as the Nucleophile in catalysis. Residue Y110 participates in substrate binding. The tract at residues 259–278 is disordered; the sequence is SKRQNGTTKVEQPSSYVHEE. A compositionally biased stretch (polar residues) spans 261–278; that stretch reads RQNGTTKVEQPSSYVHEE.

It belongs to the tRNA pseudouridine synthase TruA family. As to quaternary structure, homodimer.

The enzyme catalyses uridine(38/39/40) in tRNA = pseudouridine(38/39/40) in tRNA. In terms of biological role, formation of pseudouridine at positions 38, 39 and 40 in the anticodon stem and loop of transfer RNAs. The protein is tRNA pseudouridine synthase A of Chloroflexus aurantiacus (strain ATCC 29366 / DSM 635 / J-10-fl).